The chain runs to 509 residues: Dihydrolipoyl dehydrogenase, mitochondrial (509 aa).

Residues 1-35 constitute a mitochondrion transit peptide; that stretch reads MQSWSRVYCTLAKRGHFNRIAHGLQGVSAVPLRTY. N6-acetyllysine; alternate is present on K66. At K66 the chain carries N6-succinyllysine; alternate. FAD is bound by residues 71–80 and K89; that span reads EKNETLGGTC. C80 and C85 are oxidised to a cystine. N6-acetyllysine; alternate is present on residues K104, K122, K132, and K143. N6-succinyllysine; alternate occurs at positions 104, 122, 132, and 143. Residue G154 coordinates FAD. N6-succinyllysine is present on residues K159 and K166. An FAD-binding site is contributed by 183–185; sequence TGS. NAD(+)-binding positions include 220–227 and E243; that span reads GAGVIGVE. N6-succinyllysine occurs at positions 273 and 277. Residue V278 participates in NAD(+) binding. Residues S285 and S297 each carry the phosphoserine modification. G314 is a binding site for NAD(+). K346 is modified (N6-acetyllysine). Residues D355 and 361 to 364 contribute to the FAD site; that span reads MLAH. K410 is subject to N6-acetyllysine; alternate. The residue at position 410 (K410) is an N6-succinyllysine; alternate. N6-acetyllysine occurs at positions 417 and 420. K430 bears the N6-succinyllysine mark. H487 functions as the Proton acceptor in the catalytic mechanism. A Phosphoserine modification is found at S502. At K505 the chain carries N6-acetyllysine; alternate. K505 is subject to N6-succinyllysine; alternate.

Belongs to the class-I pyridine nucleotide-disulfide oxidoreductase family. In terms of assembly, homodimer. Part of the multimeric pyruvate dehydrogenase complex that contains multiple copies of pyruvate dehydrogenase (subunits PDHA (PDHA1 or PDHA2) and PDHB, E1), dihydrolipoamide acetyltransferase (DLAT, E2) and lipoamide dehydrogenase (DLD, E3). These subunits are bound to an inner core composed of about 48 DLAT and 12 PDHX molecules (by non covalent bonds). The 2-oxoglutarate dehydrogenase complex is composed of OGDH (2-oxoglutarate dehydrogenase; E1), DLST (dihydrolipoamide succinyltransferase; E2), DLD (dihydrolipoamide dehydrogenase; E3) and the assembly factor KGD4. It contains multiple copies of the three enzymatic components (E1, E2 and E3). In the nucleus, the 2-oxoglutarate dehydrogenase complex associates with KAT2A. Interacts with PDHX. The cofactor is FAD. In terms of processing, tyrosine phosphorylated. As to expression, expressed in heart (at protein level).

The protein localises to the mitochondrion matrix. The protein resides in the nucleus. It localises to the cell projection. Its subcellular location is the cilium. It is found in the flagellum. The protein localises to the cytoplasmic vesicle. The protein resides in the secretory vesicle. It localises to the acrosome. The enzyme catalyses N(6)-[(R)-dihydrolipoyl]-L-lysyl-[protein] + NAD(+) = N(6)-[(R)-lipoyl]-L-lysyl-[protein] + NADH + H(+). Its function is as follows. Lipoamide dehydrogenase is a component of the glycine cleavage system as well as an E3 component of three alpha-ketoacid dehydrogenase complexes (pyruvate-, alpha-ketoglutarate-, and branched-chain amino acid-dehydrogenase complex). The 2-oxoglutarate dehydrogenase complex is mainly active in the mitochondrion. A fraction of the 2-oxoglutarate dehydrogenase complex also localizes in the nucleus and is required for lysine succinylation of histones: associates with KAT2A on chromatin and provides succinyl-CoA to histone succinyltransferase KAT2A. In monomeric form may have additional moonlighting function as serine protease. Involved in the hyperactivation of spermatazoa during capacitation and in the spermatazoal acrosome reaction. This chain is Dihydrolipoyl dehydrogenase, mitochondrial (DLD), found in Sus scrofa (Pig).